We begin with the raw amino-acid sequence, 534 residues long: Acyl-CoA-binding domain-containing protein 5 (534 aa).

Residues 41 to 130 enclose the ACB domain; sequence HETRFEAAVK…MKKIIETMPM (90 aa). An an acyl-CoA-binding site is contributed by 52–61; the sequence is IQSLPKNGSF. The residue at position 63 (proline 63) is a Phosphothreonine. An acyl-CoA contacts are provided by residues 72–76, lysine 98, and tyrosine 117; that span reads YSFYK. Residues leucine 137 and glutamate 172 each carry the phosphothreonine modification. Residues 181–225 form a disordered region; the sequence is TPNAKTVNGKAESSDSGAESEEEEAQEEVKGAEQSDNDKKMMKKS. A coiled-coil region spans residues 190–219; the sequence is KAESSDSGAESEEEEAQEEVKGAEQSDNDK. Residues serine 193, serine 194, serine 196, serine 200, serine 215, serine 279, and serine 313 each carry the phosphoserine modification. Residues 207-225 show a composition bias toward basic and acidic residues; that stretch reads EEVKGAEQSDNDKKMMKKS. Basic and acidic residues predominate over residues 376–385; that stretch reads EVKHGGEDGR. The disordered stretch occupies residues 376–442; that stretch reads EVKHGGEDGR…ERWGSDRGSR (67 aa). Position 400 is a phosphothreonine (threonine 400). Serine 428 carries the phosphoserine modification. The segment covering 431 to 441 has biased composition (basic and acidic residues); it reads DGERWGSDRGS. Residues 447–476 adopt a coiled-coil conformation; the sequence is EQIALVLMRLQEDMQNVLQRLQKLETLTAL. Lysine 469 bears the N6-acetyllysine mark. Residues 506 to 526 form a helical membrane-spanning segment; the sequence is GVLTFAIIWPFIAQWLVYLYY.

It belongs to the ATG37 family.

It is found in the peroxisome membrane. Its function is as follows. Acyl-CoA binding protein which acts as the peroxisome receptor for pexophagy but is dispensable for aggrephagy and nonselective autophagy. Binds medium- and long-chain acyl-CoA esters. The sequence is that of Acyl-CoA-binding domain-containing protein 5 (ACBD5) from Homo sapiens (Human).